The following is a 179-amino-acid chain: Large ribosomal subunit protein uL5 (179 aa).

This sequence belongs to the universal ribosomal protein uL5 family. Part of the 50S ribosomal subunit; part of the 5S rRNA/L5/L18/L25 subcomplex. Contacts the 5S rRNA and the P site tRNA. Forms a bridge to the 30S subunit in the 70S ribosome.

In terms of biological role, this is one of the proteins that bind and probably mediate the attachment of the 5S RNA into the large ribosomal subunit, where it forms part of the central protuberance. In the 70S ribosome it contacts protein S13 of the 30S subunit (bridge B1b), connecting the 2 subunits; this bridge is implicated in subunit movement. Contacts the P site tRNA; the 5S rRNA and some of its associated proteins might help stabilize positioning of ribosome-bound tRNAs. The chain is Large ribosomal subunit protein uL5 from Enterobacter sp. (strain 638).